The following is a 1154-amino-acid chain: DNA-directed RNA polymerase subunit beta' (1154 aa).

4 residues coordinate Zn(2+): Cys60, Cys62, Cys75, and Cys78. The Mg(2+) site is built by Asp449, Asp451, and Asp453. Positions 774, 848, 855, and 858 each coordinate Zn(2+).

This sequence belongs to the RNA polymerase beta' chain family. As to quaternary structure, the RNAP catalytic core consists of 2 alpha, 1 beta, 1 beta' and 1 omega subunit. When a sigma factor is associated with the core the holoenzyme is formed, which can initiate transcription. Requires Mg(2+) as cofactor. Zn(2+) is required as a cofactor.

It catalyses the reaction RNA(n) + a ribonucleoside 5'-triphosphate = RNA(n+1) + diphosphate. DNA-dependent RNA polymerase catalyzes the transcription of DNA into RNA using the four ribonucleoside triphosphates as substrates. The chain is DNA-directed RNA polymerase subunit beta' from Desulforudis audaxviator (strain MP104C).